Here is a 390-residue protein sequence, read N- to C-terminus: Ribosomal RNA small subunit methyltransferase H (390 aa).

Residues 47–49, Asp-66, Phe-93, Asp-122, and Gln-129 each bind S-adenosyl-L-methionine; that span reads GGH. Residues 282–390 form a disordered region; it reads SKTPPGLPID…SHREDVEGEQ (109 aa). Over residues 305–316 the composition is skewed to basic and acidic residues; it reads GSEKADEQENNK. Polar residues predominate over residues 348–358; sequence SGSSTTYSARS. Basic and acidic residues-rich tracts occupy residues 360-372 and 381-390; these read SRHE…REHL and SHREDVEGEQ.

Belongs to the methyltransferase superfamily. RsmH family.

It is found in the cytoplasm. The enzyme catalyses cytidine(1402) in 16S rRNA + S-adenosyl-L-methionine = N(4)-methylcytidine(1402) in 16S rRNA + S-adenosyl-L-homocysteine + H(+). Specifically methylates the N4 position of cytidine in position 1402 (C1402) of 16S rRNA. The sequence is that of Ribosomal RNA small subunit methyltransferase H from Corynebacterium kroppenstedtii (strain DSM 44385 / JCM 11950 / CIP 105744 / CCUG 35717).